The sequence spans 136 residues: Glutamyl-tRNA(Gln) amidotransferase subunit C, mitochondrial (136 aa).

A mitochondrion-targeting transit peptide spans 1–27 (MWARAVHLGLRAAARGRRGFTSKADPQ).

The protein belongs to the GatC family. In terms of assembly, subunit of the heterotrimeric GatCAB amidotransferase (AdT) complex, composed of A (QRSL1), B (GATB) and C (GATC) subunits.

It localises to the mitochondrion. The catalysed reaction is L-glutamyl-tRNA(Gln) + L-glutamine + ATP + H2O = L-glutaminyl-tRNA(Gln) + L-glutamate + ADP + phosphate + H(+). Functionally, allows the formation of correctly charged Gln-tRNA(Gln) through the transamidation of misacylated Glu-tRNA(Gln) in the mitochondria. The reaction takes place in the presence of glutamine and ATP through an activated gamma-phospho-Glu-tRNA(Gln). In Bos taurus (Bovine), this protein is Glutamyl-tRNA(Gln) amidotransferase subunit C, mitochondrial.